The sequence spans 143 residues: 3-hydroxyacyl-[acyl-carrier-protein] dehydratase FabZ (143 aa).

Residue His-47 is part of the active site.

It belongs to the thioester dehydratase family. FabZ subfamily.

The protein localises to the cytoplasm. The catalysed reaction is a (3R)-hydroxyacyl-[ACP] = a (2E)-enoyl-[ACP] + H2O. Involved in unsaturated fatty acids biosynthesis. Catalyzes the dehydration of short chain beta-hydroxyacyl-ACPs and long chain saturated and unsaturated beta-hydroxyacyl-ACPs. The sequence is that of 3-hydroxyacyl-[acyl-carrier-protein] dehydratase FabZ from Rickettsia canadensis (strain McKiel).